A 338-amino-acid chain; its full sequence is Glycerol-3-phosphate dehydrogenase [NAD(P)+] (338 aa).

Residues S13, W14, and K108 each contribute to the NADPH site. Residues K108, G139, and S141 each coordinate sn-glycerol 3-phosphate. Residue A143 coordinates NADPH. Residues K194, D247, S257, R258, and N259 each contribute to the sn-glycerol 3-phosphate site. The active-site Proton acceptor is K194. R258 serves as a coordination point for NADPH. 2 residues coordinate NADPH: V282 and E284.

The protein resides in the cytoplasm. The catalysed reaction is sn-glycerol 3-phosphate + NAD(+) = dihydroxyacetone phosphate + NADH + H(+). It carries out the reaction sn-glycerol 3-phosphate + NADP(+) = dihydroxyacetone phosphate + NADPH + H(+). Its pathway is membrane lipid metabolism; glycerophospholipid metabolism. In terms of biological role, catalyzes the reduction of the glycolytic intermediate dihydroxyacetone phosphate (DHAP) to sn-glycerol 3-phosphate (G3P), the key precursor for phospholipid synthesis. This Streptococcus pyogenes serotype M6 (strain ATCC BAA-946 / MGAS10394) protein is Glycerol-3-phosphate dehydrogenase [NAD(P)+].